The primary structure comprises 257 residues: MSINDKPIGFFDSGVGGISVLKEAFKLLPKEDFLYYGDSKNAPYGTKKVEEVKALTFNATDFLMNKGIKALVVACNTATSVTINDLRENYDIPIIGIEPALKPAVELKKGGKIIIMATPMTLAEKKFANLMDLYKETEDIEPLPCPGLPELIEQGIVSGDVIYNYLKDKFSKYDNEKISSIVLGCTHYPFIEKTLKEVTYNKACIIDGSFGTSRELKRQLKNSNMLREENRVGKVTIFNSREDKDIIDLSYKLFNMK.

Substrate-binding positions include 12 to 13 (DS) and 44 to 45 (YG). Catalysis depends on Cys75, which acts as the Proton donor/acceptor. Position 76 to 77 (76 to 77 (NT)) interacts with substrate. Cys185 serves as the catalytic Proton donor/acceptor. Residue 186-187 (TH) participates in substrate binding.

Belongs to the aspartate/glutamate racemases family.

The catalysed reaction is L-glutamate = D-glutamate. It functions in the pathway cell wall biogenesis; peptidoglycan biosynthesis. Functionally, provides the (R)-glutamate required for cell wall biosynthesis. The protein is Glutamate racemase of Clostridium botulinum (strain Okra / Type B1).